Consider the following 297-residue polypeptide: Probable E3 SUMO-protein ligase RNF212 (297 aa).

An RING-type zinc finger spans residues 7 to 46 (CNRCFQPPHRTSCFSLTNCGHVYCDACLGKGKKNECLICK). Residues 91–124 (RKRLLAFYREKISRLEESLRKSVLQIEQLQSMRS) are a coiled coil.

The protein resides in the nucleus. Its subcellular location is the chromosome. It participates in protein modification; protein sumoylation. Its function is as follows. SUMO E3 ligase that acts as a regulator of crossing-over during meiosis: required to couple chromosome synapsis to the formation of crossover-specific recombination complexes. Localizes to recombination sites and stabilizes meiosis-specific recombination factors, such as MutS-gamma complex proteins (MSH4 and MSH5) and TEX11. May mediate sumoylation of target proteins MSH4 and/or MSH5, leading to enhance their binding to recombination sites. Acts as a limiting factor for crossover designation and/or reinforcement and plays an antagonist role with CCNB1IP1/HEI10 in the regulation of meiotic recombination. This is Probable E3 SUMO-protein ligase RNF212 (RNF212) from Homo sapiens (Human).